A 604-amino-acid polypeptide reads, in one-letter code: Kinesin-like protein KIN-14O (604 aa).

Residues 22-61 adopt a coiled-coil conformation; it reads MLNHDKDISALQEEISALRSRQRHLDHRRQEALDKLIDLK. In terms of domain architecture, Kinesin motor spans 63-387; sequence SIRVFCRVRP…LSFAKRARSI (325 aa). Residue 141 to 148 coordinates ATP; that stretch reads GQTGTGKT. A coiled-coil region spans residues 383–443; sequence RARSIESSKE…EERKKLSSSA (61 aa). Disordered stretches follow at residues 465–511 and 565–604; these read DSAE…KTRL and SNNS…SSLT. Positions 565–574 are enriched in polar residues; that stretch reads SNNSIDSTAA. A compositionally biased stretch (basic residues) spans 593–604; it reads LHQHRRRMSSLT.

This sequence belongs to the TRAFAC class myosin-kinesin ATPase superfamily. Kinesin family. KIN-14 subfamily.

In Oryza sativa subsp. japonica (Rice), this protein is Kinesin-like protein KIN-14O.